Reading from the N-terminus, the 64-residue chain is Large ribosomal subunit protein bL28 (64 aa).

Belongs to the bacterial ribosomal protein bL28 family.

This chain is Large ribosomal subunit protein bL28, found in Syntrophobacter fumaroxidans (strain DSM 10017 / MPOB).